The sequence spans 194 residues: MSREALQETLSAVMDNEADELELRRVLAACGEDAELRSTWSRYQLARSVMHREPTLPKLDIAAAVSAALADEAAPPKAEKGPWRMVGRLAVAASVTLAVLAGVRLYNQNDALPQMAQQGTTPQIALPQVKGPAVLAGYSEEQGAPQVITNSSSSDTRWHEQRLPIYLRQHVQQSAVSGTESALPYARAASLENR.

The helical transmembrane segment at 89–105 threads the bilayer; sequence LAVAASVTLAVLAGVRL.

This sequence belongs to the RseA family.

The protein resides in the cell membrane. In terms of biological role, negative regulator of the sigma factor AlgU. Plays a role in the differentiation of P.aeruginosa into the alginate-producing form. Inactivation of mucA causes a switch from the non-mucoid to mucoid state resulting in constitutive expression of alginate biosynthetic genes. The chain is Sigma factor AlgU negative regulatory protein (mucA) from Pseudomonas aeruginosa (strain ATCC 15692 / DSM 22644 / CIP 104116 / JCM 14847 / LMG 12228 / 1C / PRS 101 / PAO1).